Reading from the N-terminus, the 840-residue chain is Phosphatidylglycerol lysyltransferase (840 aa).

Residues methionine 1–lysine 8 lie on the Cytoplasmic side of the membrane. The chain crosses the membrane as a helical span at residues isoleucine 9–leucine 29. Residues tyrosine 30 to serine 52 lie on the Extracellular side of the membrane. The helical transmembrane segment at leucine 53 to isoleucine 73 threads the bilayer. The Cytoplasmic segment spans residues leucine 74–arginine 89. A helical transmembrane segment spans residues valine 90–glycine 110. Residues valine 111 to histidine 128 lie on the Extracellular side of the membrane. The chain crosses the membrane as a helical span at residues phenylalanine 129–valine 149. Residues phenylalanine 150 to lysine 161 are Cytoplasmic-facing. Residues isoleucine 162 to tyrosine 182 traverse the membrane as a helical segment. Residues serine 183–threonine 200 lie on the Extracellular side of the membrane. The chain crosses the membrane as a helical span at residues leucine 201–valine 221. The Cytoplasmic segment spans residues aspartate 222 to serine 229. A helical membrane pass occupies residues phenylalanine 230 to phenylalanine 250. At glycine 251–valine 271 the chain is on the extracellular side. A helical membrane pass occupies residues leucine 272–isoleucine 292. Residues leucine 293–serine 337 are Cytoplasmic-facing. A helical transmembrane segment spans residues leucine 338–tyrosine 358. At aspartate 359–tyrosine 369 the chain is on the extracellular side. The helical transmembrane segment at tyrosine 370 to isoleucine 390 threads the bilayer. At tyrosine 391–serine 394 the chain is on the cytoplasmic side. The next 2 membrane-spanning stretches (helical) occupy residues arginine 395–threonine 415 and tyrosine 416–phenylalanine 436. The Cytoplasmic portion of the chain corresponds to arginine 437–asparagine 450. Residues isoleucine 451–glycine 471 form a helical membrane-spanning segment. Topologically, residues threonine 472–arginine 489 are extracellular. The chain crosses the membrane as a helical span at residues tyrosine 490–phenylalanine 510. Residues aspartate 511–lysine 840 lie on the Cytoplasmic side of the membrane.

This sequence belongs to the LPG synthase family.

Its subcellular location is the cell membrane. The catalysed reaction is L-lysyl-tRNA(Lys) + a 1,2-diacyl-sn-glycero-3-phospho-(1'-sn-glycerol) = a 1,2-diacyl-sn-glycero-3-phospho-1'-(3'-O-L-lysyl)-sn-glycerol + tRNA(Lys). Functionally, catalyzes the transfer of a lysyl group from L-lysyl-tRNA(Lys) to membrane-bound phosphatidylglycerol (PG), which produces lysylphosphatidylglycerol (LPG), a major component of the bacterial membrane with a positive net charge. LPG synthesis contributes to bacterial virulence as it is involved in the resistance mechanism against cationic antimicrobial peptides (CAMP) produces by the host's immune system (defensins, cathelicidins) and by the competing microorganisms (bacteriocins). In fact, the modification of anionic phosphatidylglycerol with positively charged L-lysine results in repulsion of the peptides. The sequence is that of Phosphatidylglycerol lysyltransferase (mprF) from Staphylococcus aureus (strain MSSA476).